A 101-amino-acid polypeptide reads, in one-letter code: MNDAVTKPKTRTKTKVERPKLHKVILINDDYTPREFVTMILKAEFRMTEDQAYKVMITAHKLGACVVAVFTRDVAETKATRATDAGRAKGYPLLFTTEPEE.

The protein belongs to the ClpS family. In terms of assembly, binds to the N-terminal domain of the chaperone ClpA.

Its function is as follows. Involved in the modulation of the specificity of the ClpAP-mediated ATP-dependent protein degradation. The sequence is that of ATP-dependent Clp protease adapter protein ClpS 1 from Bradyrhizobium diazoefficiens (strain JCM 10833 / BCRC 13528 / IAM 13628 / NBRC 14792 / USDA 110).